The chain runs to 149 residues: Small ribosomal subunit protein uS17c (149 aa).

The N-terminal 49 residues, 1-49, are a transit peptide targeting the chloroplast; that stretch reads MITSSLTSSLQALKLSSPFAHGSTPLSSLSKPNSFPNHRMPALVPVIRA.

Belongs to the universal ribosomal protein uS17 family. As to quaternary structure, part of the 30S ribosomal subunit.

It is found in the plastid. The protein localises to the chloroplast. Functionally, one of the primary rRNA binding proteins, it binds specifically to the 5'-end of 16S ribosomal RNA. Required for optimal plastid performance in terms of photosynthesis and growth. Required for the translation of plastid mRNAs. Plays a critical role in biosynthesis of thylakoid membrane proteins encoded by chloroplast genes. This is Small ribosomal subunit protein uS17c (RPS17) from Arabidopsis thaliana (Mouse-ear cress).